The primary structure comprises 236 residues: 7-cyano-7-deazaguanine synthase (236 aa).

An ATP-binding site is contributed by 7-17; that stretch reads CSGGLDSVSLA. Zn(2+)-binding residues include Cys185, Cys193, Cys196, and Cys199.

This sequence belongs to the QueC family. It depends on Zn(2+) as a cofactor.

It carries out the reaction 7-carboxy-7-deazaguanine + NH4(+) + ATP = 7-cyano-7-deazaguanine + ADP + phosphate + H2O + H(+). It functions in the pathway purine metabolism; 7-cyano-7-deazaguanine biosynthesis. Catalyzes the ATP-dependent conversion of 7-carboxy-7-deazaguanine (CDG) to 7-cyano-7-deazaguanine (preQ(0)). The chain is 7-cyano-7-deazaguanine synthase from Rhizobium etli (strain ATCC 51251 / DSM 11541 / JCM 21823 / NBRC 15573 / CFN 42).